The primary structure comprises 196 residues: MADS-box protein FLOWERING LOCUS C (196 aa).

The 61-residue stretch at 1–61 (MGRKKLEIKR…GKLYSFSSGD (61 aa)) folds into the MADS-box domain. Positions 8–15 (IKRIENKS) match the Nuclear localization signal motif. One can recognise a K-box domain in the interval 80–170 (ALDHQSKALN…ASQMENNHHV (91 aa)).

High expression in the vegetative apex and in root tissue and lower expression in leaves and stems. Not detected in young tissues of the inflorescence. Before fertilization, expressed in ovules, but not in pollen or stamens, of non-vernalized plants. After vernalization, not detected in ovules.

It is found in the nucleus. Putative transcription factor that seems to play a central role in the regulation of flowering time in the late-flowering phenotype by interacting with 'FRIGIDA', the autonomous and the vernalization flowering pathways. Inhibits flowering by repressing 'SUPPRESSOR OF OVEREXPRESSION OF CONSTANS 1'. At elevated temperatures (e.g. 29 degrees Celsius), maintained at high levels in a JMJ30/JMJ32-dependent manner to prevent extreme precocious flowering. The chain is MADS-box protein FLOWERING LOCUS C from Arabidopsis thaliana (Mouse-ear cress).